Reading from the N-terminus, the 44-residue chain is U2-agatoxin-Ao1s (44 aa).

The propeptide occupies 1–9; it reads KKVYSFLKL. Cystine bridges form between cysteine 12–cysteine 28, cysteine 19–cysteine 33, and cysteine 27–cysteine 43.

It belongs to the neurotoxin 01 (U2-agtx) family. Expressed by the venom gland.

The protein resides in the secreted. In terms of biological role, insect active toxin causing rapid but reversible paralysis in crickets. No activity shown in mammals. Does not show effect on mammalian voltage-gated calcium channels. The protein is U2-agatoxin-Ao1s of Agelena orientalis (Funnel-web spider).